The sequence spans 224 residues: Flagellar L-ring protein (224 aa).

Residues 1–15 (MKWYLVALSGLLLSG) form the signal peptide. Cysteine 16 is lipidated: N-palmitoyl cysteine. A lipid anchor (S-diacylglycerol cysteine) is attached at cysteine 16.

It belongs to the FlgH family. As to quaternary structure, the basal body constitutes a major portion of the flagellar organelle and consists of four rings (L,P,S, and M) mounted on a central rod.

The protein localises to the cell outer membrane. The protein resides in the bacterial flagellum basal body. In terms of biological role, assembles around the rod to form the L-ring and probably protects the motor/basal body from shearing forces during rotation. The polypeptide is Flagellar L-ring protein (Trichlorobacter lovleyi (strain ATCC BAA-1151 / DSM 17278 / SZ) (Geobacter lovleyi)).